A 527-amino-acid polypeptide reads, in one-letter code: DNA polymerase epsilon subunit 2 (527 aa).

The protein belongs to the DNA polymerase epsilon subunit B family. In terms of assembly, component of the DNA polymerase epsilon complex consisting of four subunits: the catalytic subunit POLE and the accessory subunits POLE2, POLE3 and POLE4.

It is found in the nucleus. In terms of biological role, accessory component of the DNA polymerase epsilon complex. Participates in DNA repair and in chromosomal DNA replication. The sequence is that of DNA polymerase epsilon subunit 2 (POLE2) from Bos taurus (Bovine).